The chain runs to 240 residues: Large ribosomal subunit protein bL25 (240 aa).

A disordered region spans residues 1–23; it reads MATVKELKATARPKAGKGAARAE. Low complexity predominate over residues 10 to 19; that stretch reads TARPKAGKGA.

Belongs to the bacterial ribosomal protein bL25 family. CTC subfamily. Part of the 50S ribosomal subunit; part of the 5S rRNA/L5/L18/L25 subcomplex. Contacts the 5S rRNA. Binds to the 5S rRNA independently of L5 and L18.

Functionally, this is one of the proteins that binds to the 5S RNA in the ribosome where it forms part of the central protuberance. This is Large ribosomal subunit protein bL25 from Afipia carboxidovorans (strain ATCC 49405 / DSM 1227 / KCTC 32145 / OM5) (Oligotropha carboxidovorans).